The primary structure comprises 298 residues: Lipoyl synthase (298 aa).

Residues C40, C45, C51, C67, C71, C74, and S280 each contribute to the [4Fe-4S] cluster site. The Radical SAM core domain occupies 53–269; the sequence is AVRKTATFMI…KEIALSKGFS (217 aa).

It belongs to the radical SAM superfamily. Lipoyl synthase family. [4Fe-4S] cluster serves as cofactor.

The protein resides in the cytoplasm. The catalysed reaction is [[Fe-S] cluster scaffold protein carrying a second [4Fe-4S](2+) cluster] + N(6)-octanoyl-L-lysyl-[protein] + 2 oxidized [2Fe-2S]-[ferredoxin] + 2 S-adenosyl-L-methionine + 4 H(+) = [[Fe-S] cluster scaffold protein] + N(6)-[(R)-dihydrolipoyl]-L-lysyl-[protein] + 4 Fe(3+) + 2 hydrogen sulfide + 2 5'-deoxyadenosine + 2 L-methionine + 2 reduced [2Fe-2S]-[ferredoxin]. Its pathway is protein modification; protein lipoylation via endogenous pathway; protein N(6)-(lipoyl)lysine from octanoyl-[acyl-carrier-protein]. Its function is as follows. Catalyzes the radical-mediated insertion of two sulfur atoms into the C-6 and C-8 positions of the octanoyl moiety bound to the lipoyl domains of lipoate-dependent enzymes, thereby converting the octanoylated domains into lipoylated derivatives. This is Lipoyl synthase from Bacillus cereus (strain ATCC 10987 / NRS 248).